Consider the following 413-residue polypeptide: S-adenosylmethionine synthase (413 aa).

His15 is a binding site for ATP. A Mg(2+)-binding site is contributed by Asp17. Glu43 provides a ligand contact to K(+). 2 residues coordinate L-methionine: Glu56 and Gln100. The interval 100 to 110 is flexible loop; sequence QSPDISQGVNE. ATP is bound by residues 171-173, 248-249, Asp257, 263-264, Ala280, and Lys284; these read DGK, KF, and RK. Residue Asp257 participates in L-methionine binding. Lys288 provides a ligand contact to L-methionine.

Belongs to the AdoMet synthase family. Homotetramer; dimer of dimers. Requires Mg(2+) as cofactor. The cofactor is K(+).

The protein localises to the cytoplasm. The enzyme catalyses L-methionine + ATP + H2O = S-adenosyl-L-methionine + phosphate + diphosphate. It participates in amino-acid biosynthesis; S-adenosyl-L-methionine biosynthesis; S-adenosyl-L-methionine from L-methionine: step 1/1. Catalyzes the formation of S-adenosylmethionine (AdoMet) from methionine and ATP. The overall synthetic reaction is composed of two sequential steps, AdoMet formation and the subsequent tripolyphosphate hydrolysis which occurs prior to release of AdoMet from the enzyme. In Prochlorococcus marinus subsp. pastoris (strain CCMP1986 / NIES-2087 / MED4), this protein is S-adenosylmethionine synthase.